We begin with the raw amino-acid sequence, 147 residues long: Peptide deformylase (147 aa).

2 residues coordinate Fe cation: Cys88 and His130. Glu131 is an active-site residue. His134 is a binding site for Fe cation.

The protein belongs to the polypeptide deformylase family. Fe(2+) is required as a cofactor.

The catalysed reaction is N-terminal N-formyl-L-methionyl-[peptide] + H2O = N-terminal L-methionyl-[peptide] + formate. In terms of biological role, removes the formyl group from the N-terminal Met of newly synthesized proteins. Requires at least a dipeptide for an efficient rate of reaction. N-terminal L-methionine is a prerequisite for activity but the enzyme has broad specificity at other positions. The polypeptide is Peptide deformylase (Alkaliphilus metalliredigens (strain QYMF)).